A 91-amino-acid chain; its full sequence is Small ribosomal subunit protein uS19 (91 aa).

Belongs to the universal ribosomal protein uS19 family.

Protein S19 forms a complex with S13 that binds strongly to the 16S ribosomal RNA. In Opitutus terrae (strain DSM 11246 / JCM 15787 / PB90-1), this protein is Small ribosomal subunit protein uS19.